Reading from the N-terminus, the 292-residue chain is tRNA(Ile)-lysidine synthase (292 aa).

Residue 32–37 participates in ATP binding; it reads SGGADS.

The protein belongs to the tRNA(Ile)-lysidine synthase family.

The protein resides in the cytoplasm. It carries out the reaction cytidine(34) in tRNA(Ile2) + L-lysine + ATP = lysidine(34) in tRNA(Ile2) + AMP + diphosphate + H(+). Functionally, ligates lysine onto the cytidine present at position 34 of the AUA codon-specific tRNA(Ile) that contains the anticodon CAU, in an ATP-dependent manner. Cytidine is converted to lysidine, thus changing the amino acid specificity of the tRNA from methionine to isoleucine. This is tRNA(Ile)-lysidine synthase from Corynebacterium diphtheriae (strain ATCC 700971 / NCTC 13129 / Biotype gravis).